The primary structure comprises 593 residues: MGEALRGLKRTIMCGESRENNIGQKVTVMGWVQRKRNLGGLIFVDLRDRTGIMQIVFGEEINKEAFEKSDNVKSEYCIAVTGEIVKRQSPNNDMETGAVELKGEDIKILSESETPPIYIKEGLDASENIRLKYRYLDLRRPDMQKIFMIRHKTCKVVRDFLDENGFLEMETPILTKSTPEGARDYLVPSRNYKGMFYALPQSPQIFKQLLMVSGYDKYFQITKCFRDEDLRANRQPEFTQIDMELSFVEEDDVIELNERLLAKVFKEVGGIDVKLPIERMPYKIAMEKYGSDKPDLRFGMEINDLTEAVKNSEFKVFKGAIEAGGSVRAIKAENCATMGRKQIDKLQDFVKTYKAKGLAWIAYKEDEIKSPIAKFLTEEEMKAILEKMDAKAGDLILIVADKNNVVFESLGALRLHIAKELDIINKNEFRFVWITEFPLLAYNEEEGRYQAEHHPFTAIMDEDIELLGTEPGKVRAKAYDIVLNGEELGGGSIRIHDSKFQEKMFSVLGFTKEKAWERFGFLLEAFKFGPPPHGGLAYGLDRMIMFLAGTENIKDVITFPKNQNAFCPLTEAPNVVDENQLEELGIKKIEKED.

L-aspartate is bound at residue E180. The segment at 204–207 is aspartate; it reads QIFK. R226 provides a ligand contact to L-aspartate. ATP contacts are provided by residues 226–228 and Q235; that span reads RDE. H453 contributes to the L-aspartate binding site. E487 contributes to the ATP binding site. R494 is a binding site for L-aspartate. Residue 539-542 coordinates ATP; that stretch reads GLDR.

This sequence belongs to the class-II aminoacyl-tRNA synthetase family. Type 1 subfamily. In terms of assembly, homodimer.

The protein localises to the cytoplasm. The catalysed reaction is tRNA(Asp) + L-aspartate + ATP = L-aspartyl-tRNA(Asp) + AMP + diphosphate. Functionally, catalyzes the attachment of L-aspartate to tRNA(Asp) in a two-step reaction: L-aspartate is first activated by ATP to form Asp-AMP and then transferred to the acceptor end of tRNA(Asp). The sequence is that of Aspartate--tRNA ligase from Clostridium botulinum (strain ATCC 19397 / Type A).